The primary structure comprises 210 residues: Probable nicotinate-nucleotide adenylyltransferase (210 aa).

This sequence belongs to the NadD family.

The catalysed reaction is nicotinate beta-D-ribonucleotide + ATP + H(+) = deamido-NAD(+) + diphosphate. It functions in the pathway cofactor biosynthesis; NAD(+) biosynthesis; deamido-NAD(+) from nicotinate D-ribonucleotide: step 1/1. Functionally, catalyzes the reversible adenylation of nicotinate mononucleotide (NaMN) to nicotinic acid adenine dinucleotide (NaAD). This Vesicomyosocius okutanii subsp. Calyptogena okutanii (strain HA) protein is Probable nicotinate-nucleotide adenylyltransferase.